Reading from the N-terminus, the 197-residue chain is Recombination protein RecR (197 aa).

The C4-type zinc-finger motif lies at 56–71; sequence CKRCGSYAETEICNIC. One can recognise a Toprim domain in the interval 79–174; the sequence is HTFCVVEQPE…DVTRIAYGIT (96 aa).

This sequence belongs to the RecR family.

Its function is as follows. May play a role in DNA repair. It seems to be involved in an RecBC-independent recombinational process of DNA repair. It may act with RecF and RecO. In Leptospira borgpetersenii serovar Hardjo-bovis (strain JB197), this protein is Recombination protein RecR.